Here is a 202-residue protein sequence, read N- to C-terminus: Dephospho-CoA kinase (202 aa).

The 197-residue stretch at 6-202 (KISVTGDPSS…QCFKALKGTI (197 aa)) folds into the DPCK domain. Residue 14–19 (SSGKTE) participates in ATP binding.

The protein belongs to the CoaE family.

It localises to the cytoplasm. The enzyme catalyses 3'-dephospho-CoA + ATP = ADP + CoA + H(+). The protein operates within cofactor biosynthesis; coenzyme A biosynthesis; CoA from (R)-pantothenate: step 5/5. Its function is as follows. Catalyzes the phosphorylation of the 3'-hydroxyl group of dephosphocoenzyme A to form coenzyme A. The sequence is that of Dephospho-CoA kinase from Chlamydia trachomatis serovar D (strain ATCC VR-885 / DSM 19411 / UW-3/Cx).